The sequence spans 147 residues: Nucleoside diphosphate kinase (147 aa).

Lys-9, Phe-57, Arg-85, Thr-91, Arg-102, and Asn-112 together coordinate ATP. His-115 serves as the catalytic Pros-phosphohistidine intermediate.

Belongs to the NDK family. Mg(2+) serves as cofactor.

It is found in the cytoplasm. It catalyses the reaction a 2'-deoxyribonucleoside 5'-diphosphate + ATP = a 2'-deoxyribonucleoside 5'-triphosphate + ADP. The catalysed reaction is a ribonucleoside 5'-diphosphate + ATP = a ribonucleoside 5'-triphosphate + ADP. Major role in the synthesis of nucleoside triphosphates other than ATP. The ATP gamma phosphate is transferred to the NDP beta phosphate via a ping-pong mechanism, using a phosphorylated active-site intermediate. The protein is Nucleoside diphosphate kinase of Thermoplasma volcanium (strain ATCC 51530 / DSM 4299 / JCM 9571 / NBRC 15438 / GSS1).